A 429-amino-acid chain; its full sequence is 3-phosphoshikimate 1-carboxyvinyltransferase (429 aa).

3 residues coordinate 3-phosphoshikimate: lysine 22, serine 23, and arginine 27. Position 22 (lysine 22) interacts with phosphoenolpyruvate. The phosphoenolpyruvate site is built by glycine 94 and arginine 122. 3-phosphoshikimate-binding residues include serine 167, glutamine 169, aspartate 315, and lysine 342. Glutamine 169 provides a ligand contact to phosphoenolpyruvate. Catalysis depends on aspartate 315, which acts as the Proton acceptor. Positions 346 and 388 each coordinate phosphoenolpyruvate.

It belongs to the EPSP synthase family. Monomer.

It localises to the cytoplasm. The catalysed reaction is 3-phosphoshikimate + phosphoenolpyruvate = 5-O-(1-carboxyvinyl)-3-phosphoshikimate + phosphate. The protein operates within metabolic intermediate biosynthesis; chorismate biosynthesis; chorismate from D-erythrose 4-phosphate and phosphoenolpyruvate: step 6/7. Its function is as follows. Catalyzes the transfer of the enolpyruvyl moiety of phosphoenolpyruvate (PEP) to the 5-hydroxyl of shikimate-3-phosphate (S3P) to produce enolpyruvyl shikimate-3-phosphate and inorganic phosphate. In Geobacter sulfurreducens (strain ATCC 51573 / DSM 12127 / PCA), this protein is 3-phosphoshikimate 1-carboxyvinyltransferase.